The sequence spans 177 residues: ATP synthase subunit delta (177 aa).

This sequence belongs to the ATPase delta chain family. As to quaternary structure, F-type ATPases have 2 components, F(1) - the catalytic core - and F(0) - the membrane proton channel. F(1) has five subunits: alpha(3), beta(3), gamma(1), delta(1), epsilon(1). F(0) has three main subunits: a(1), b(2) and c(10-14). The alpha and beta chains form an alternating ring which encloses part of the gamma chain. F(1) is attached to F(0) by a central stalk formed by the gamma and epsilon chains, while a peripheral stalk is formed by the delta and b chains.

The protein resides in the cell inner membrane. In terms of biological role, f(1)F(0) ATP synthase produces ATP from ADP in the presence of a proton or sodium gradient. F-type ATPases consist of two structural domains, F(1) containing the extramembraneous catalytic core and F(0) containing the membrane proton channel, linked together by a central stalk and a peripheral stalk. During catalysis, ATP synthesis in the catalytic domain of F(1) is coupled via a rotary mechanism of the central stalk subunits to proton translocation. Functionally, this protein is part of the stalk that links CF(0) to CF(1). It either transmits conformational changes from CF(0) to CF(1) or is implicated in proton conduction. This chain is ATP synthase subunit delta, found in Aeromonas hydrophila subsp. hydrophila (strain ATCC 7966 / DSM 30187 / BCRC 13018 / CCUG 14551 / JCM 1027 / KCTC 2358 / NCIMB 9240 / NCTC 8049).